The chain runs to 336 residues: MRHDWTRDEVEALISLPFPELMYRAQTLHRRYFDPTKVQISTLLSIKTGGCPEDCAYCPQSALHEKSVKAERLMAVESVIKEARAAKKAGAGRFCMGAAWRTPKDHDLDTVCEMIEGVKSLGLETCVTLGMLDAQQTERLKKAGLDYYNHNLDTSEEFYGSIISTRTYQQRLDTLSNVRDAGINVCCGGIVGMGEDLSDRAGLLMTLANLPKHPESVPINLLVRVEGTPLGEAEAVDPITFVRIIATARIMMPESHVRLAAGRENMTDEAHALCFLAGANSIFCGEKLLTTPNPAEHRDRQLLSALGMSPMVQSEAEMGTMRPAVTEDAVCEMAVS.

Positions 36–263 (TKVQISTLLS…ESHVRLAAGR (228 aa)) constitute a Radical SAM core domain. [4Fe-4S] cluster is bound by residues C51, C55, and C58. Residues C95, C126, C186, and R258 each contribute to the [2Fe-2S] cluster site.

Belongs to the radical SAM superfamily. Biotin synthase family. As to quaternary structure, homodimer. The cofactor is [4Fe-4S] cluster. [2Fe-2S] cluster is required as a cofactor.

It carries out the reaction (4R,5S)-dethiobiotin + (sulfur carrier)-SH + 2 reduced [2Fe-2S]-[ferredoxin] + 2 S-adenosyl-L-methionine = (sulfur carrier)-H + biotin + 2 5'-deoxyadenosine + 2 L-methionine + 2 oxidized [2Fe-2S]-[ferredoxin]. The protein operates within cofactor biosynthesis; biotin biosynthesis; biotin from 7,8-diaminononanoate: step 2/2. In terms of biological role, catalyzes the conversion of dethiobiotin (DTB) to biotin by the insertion of a sulfur atom into dethiobiotin via a radical-based mechanism. The polypeptide is Biotin synthase (Gluconobacter oxydans (strain 621H) (Gluconobacter suboxydans)).